We begin with the raw amino-acid sequence, 131 residues long: Protein ApaG (131 aa).

Positions 7–131 (PVKPYDLTVS…FLLAMPRTLH (125 aa)) constitute an ApaG domain.

The polypeptide is Protein ApaG (Bordetella bronchiseptica (strain ATCC BAA-588 / NCTC 13252 / RB50) (Alcaligenes bronchisepticus)).